We begin with the raw amino-acid sequence, 105 residues long: MAINNQRIRIRLKAFDHKLIDISTQEIVDTAKKTGAQVKGPIPLPVRKERFTILISPHVNKKARDQYEIRTHKRLIDIVEPTDKTVDALMKLDLASGVDVQISLS.

This sequence belongs to the universal ribosomal protein uS10 family. As to quaternary structure, part of the 30S ribosomal subunit.

Functionally, involved in the binding of tRNA to the ribosomes. This Francisella tularensis subsp. mediasiatica (strain FSC147) protein is Small ribosomal subunit protein uS10.